Reading from the N-terminus, the 433-residue chain is MRMVDIIEKKRDGKSLSKEEIEFFIKGYTNGDIPDYQASSLAMAIFFQDMNDEERAALTMAMVNSGDVIDLSKINGIKVDKHSTGGVGDTTTLVLAPLVAAVGVPVAKMSGRGLGHTGGTIDKLESIKGFHVEISEEDFIKLVNENQVAVIGQSGNLTPADKKLYALRDVTGTVNSIPLIASSIMSKKIAAGADAIVLDVKTGNGAFMKTLEDAEALAHAMVSIGNNVGRNTMAIISDMSQPLGRAIGNALELKEAIDTLNGKGPEDLTELVLTLGSQMVVLANRANTLEEARQLLNEAIENGSALEKFKTFLENQGGDVSVVDAPELLPTATYQIEYKAQSSGVVSELIANEIGVASMMLGAGRQTKEDEIDLSVGIVLNKKVGDVVKEGESLLTIHSNRENVDDVIKKLDESIEIQAQATTPTLIHKIITE.

K81 to S83 is a phosphate binding site. Residues G88 and T90 each contribute to the K(+) site. Phosphate contacts are provided by residues T92, K108–S110, and T120. The substrate site is built by R168 and K187. The K(+) site is built by L243, A246, and E255.

It belongs to the thymidine/pyrimidine-nucleoside phosphorylase family. Homodimer. K(+) is required as a cofactor.

The enzyme catalyses uridine + phosphate = alpha-D-ribose 1-phosphate + uracil. The catalysed reaction is thymidine + phosphate = 2-deoxy-alpha-D-ribose 1-phosphate + thymine. It carries out the reaction 2'-deoxyuridine + phosphate = 2-deoxy-alpha-D-ribose 1-phosphate + uracil. Its function is as follows. Catalyzes phosphorolysis of the pyrimidine nucleosides uridine, thymidine and 2'-deoxyuridine with the formation of the corresponding pyrimidine base and ribose-1-phosphate. This is Pyrimidine-nucleoside phosphorylase (pdp) from Staphylococcus haemolyticus (strain JCSC1435).